A 258-amino-acid chain; its full sequence is Imidazole glycerol phosphate synthase subunit HisF (258 aa).

Residues Asp11 and Asp130 contribute to the active site.

This sequence belongs to the HisA/HisF family. In terms of assembly, heterodimer of HisH and HisF.

It localises to the cytoplasm. The enzyme catalyses 5-[(5-phospho-1-deoxy-D-ribulos-1-ylimino)methylamino]-1-(5-phospho-beta-D-ribosyl)imidazole-4-carboxamide + L-glutamine = D-erythro-1-(imidazol-4-yl)glycerol 3-phosphate + 5-amino-1-(5-phospho-beta-D-ribosyl)imidazole-4-carboxamide + L-glutamate + H(+). The protein operates within amino-acid biosynthesis; L-histidine biosynthesis; L-histidine from 5-phospho-alpha-D-ribose 1-diphosphate: step 5/9. Functionally, IGPS catalyzes the conversion of PRFAR and glutamine to IGP, AICAR and glutamate. The HisF subunit catalyzes the cyclization activity that produces IGP and AICAR from PRFAR using the ammonia provided by the HisH subunit. This chain is Imidazole glycerol phosphate synthase subunit HisF, found in Stenotrophomonas maltophilia (strain R551-3).